Here is a 375-residue protein sequence, read N- to C-terminus: N-acetylneuraminate epimerase (375 aa).

A signal peptide spans 1–22; the sequence is MKLTKTALCTALFATFTFSANA. Kelch repeat units lie at residues 43 to 87, 89 to 140, 142 to 176, 177 to 222, 225 to 273, 295 to 344, and 346 to 375; these read TVYV…AAVD, KLYV…ASHG, KVYI…EIVA, AYFD…TIQG, LVVV…LAGA, KQFK…SYNN, and VLLI…LTVE. Glu-231 serves as the catalytic Proton acceptor.

It belongs to the NanM family. In terms of assembly, homodimer.

Its subcellular location is the periplasm. The enzyme catalyses N-acetyl-alpha-neuraminate = N-acetyl-beta-neuraminate. Functionally, converts alpha-N-acetylneuranimic acid (Neu5Ac) to the beta-anomer, accelerating the equilibrium between the alpha- and beta-anomers. Probably facilitates sialidase-negative bacteria to compete successfully for limited amounts of extracellular Neu5Ac, which is likely taken up in the beta-anomer. In addition, the rapid removal of sialic acid from solution might be advantageous to the bacterium to damp down host responses. The chain is N-acetylneuraminate epimerase from Haemophilus influenzae (strain 86-028NP).